Reading from the N-terminus, the 165-residue chain is Phosphopantetheine adenylyltransferase (165 aa).

A substrate-binding site is contributed by Ser-10. Residues 10–11 and His-18 contribute to the ATP site; that span reads SF. Substrate is bound by residues Lys-42, Thr-79, and Arg-93. Residues 94–96, Glu-104, and 129–135 contribute to the ATP site; these read GLR and VRPITAT.

This sequence belongs to the bacterial CoaD family. As to quaternary structure, homohexamer. It depends on Mg(2+) as a cofactor.

Its subcellular location is the cytoplasm. It carries out the reaction (R)-4'-phosphopantetheine + ATP + H(+) = 3'-dephospho-CoA + diphosphate. It participates in cofactor biosynthesis; coenzyme A biosynthesis; CoA from (R)-pantothenate: step 4/5. Functionally, reversibly transfers an adenylyl group from ATP to 4'-phosphopantetheine, yielding dephospho-CoA (dPCoA) and pyrophosphate. The sequence is that of Phosphopantetheine adenylyltransferase from Afipia carboxidovorans (strain ATCC 49405 / DSM 1227 / KCTC 32145 / OM5) (Oligotropha carboxidovorans).